Consider the following 563-residue polypeptide: Proline--tRNA ligase (563 aa).

This sequence belongs to the class-II aminoacyl-tRNA synthetase family. ProS type 1 subfamily. As to quaternary structure, homodimer.

The protein resides in the cytoplasm. The enzyme catalyses tRNA(Pro) + L-proline + ATP = L-prolyl-tRNA(Pro) + AMP + diphosphate. Catalyzes the attachment of proline to tRNA(Pro) in a two-step reaction: proline is first activated by ATP to form Pro-AMP and then transferred to the acceptor end of tRNA(Pro). As ProRS can inadvertently accommodate and process non-cognate amino acids such as alanine and cysteine, to avoid such errors it has two additional distinct editing activities against alanine. One activity is designated as 'pretransfer' editing and involves the tRNA(Pro)-independent hydrolysis of activated Ala-AMP. The other activity is designated 'posttransfer' editing and involves deacylation of mischarged Ala-tRNA(Pro). The misacylated Cys-tRNA(Pro) is not edited by ProRS. This is Proline--tRNA ligase from Persephonella marina (strain DSM 14350 / EX-H1).